We begin with the raw amino-acid sequence, 356 residues long: Heat-inducible transcription repressor HrcA (356 aa).

Belongs to the HrcA family.

Functionally, negative regulator of class I heat shock genes (grpE-dnaK-dnaJ and groELS operons). Prevents heat-shock induction of these operons. The protein is Heat-inducible transcription repressor HrcA of Bartonella henselae (strain ATCC 49882 / DSM 28221 / CCUG 30454 / Houston 1) (Rochalimaea henselae).